Consider the following 239-residue polypeptide: NADH-quinone oxidoreductase chain 2 (239 aa).

The [2Fe-2S] cluster site is built by Cys96, Cys101, Cys137, and Cys141.

This sequence belongs to the complex I 24 kDa subunit family. In terms of assembly, NDH-1 is composed of at least 14 different subunits, Nqo1 to Nqo14. The complex has a L-shaped structure, with the hydrophobic arm (subunits Nqo7, Nqo8, Nqo10 to Nqo14) embedded in the inner membrane and the hydrophilic peripheral arm (subunits Nqo1 to Nqo6, Nqo9) protruding into the bacterial cytoplasm. The hydrophilic domain contains all the redox centers. Requires [2Fe-2S] cluster as cofactor.

It is found in the cell inner membrane. The catalysed reaction is a quinone + NADH + 5 H(+)(in) = a quinol + NAD(+) + 4 H(+)(out). Its function is as follows. NDH-1 shuttles electrons from NADH, via FMN and iron-sulfur (Fe-S) centers, to quinones in the respiratory chain. The immediate electron acceptor for the enzyme in this species is believed to be ubiquinone. Couples the redox reaction to proton translocation (for every two electrons transferred, four hydrogen ions are translocated across the cytoplasmic membrane), and thus conserves the redox energy in a proton gradient. This is NADH-quinone oxidoreductase chain 2 (nqo2) from Paracoccus denitrificans.